A 152-amino-acid chain; its full sequence is MASVDTYKKNWKQFFNDHDLDDNIQQQLYNIINNMRLEDFRIIITNHNTVDDEIGPRPYSEFTIGDVKGELHCCGYFFIKNNTNYIIDYYKFQDQFYESTSFCINDIKELIFTSLFEESNEHMLEINDEENRIEIQDIFKKFFDVILIEKTY.

This is an uncharacterized protein from Acheta domesticus (House cricket).